Consider the following 296-residue polypeptide: UDP-N-acetylenolpyruvoylglucosamine reductase (296 aa).

The FAD-binding PCMH-type domain occupies R26–N191. Residue R170 is part of the active site. The active-site Proton donor is C218. Residue E287 is part of the active site.

It belongs to the MurB family. It depends on FAD as a cofactor.

It is found in the cytoplasm. The enzyme catalyses UDP-N-acetyl-alpha-D-muramate + NADP(+) = UDP-N-acetyl-3-O-(1-carboxyvinyl)-alpha-D-glucosamine + NADPH + H(+). Its pathway is cell wall biogenesis; peptidoglycan biosynthesis. Functionally, cell wall formation. The protein is UDP-N-acetylenolpyruvoylglucosamine reductase of Chlamydia abortus (strain DSM 27085 / S26/3) (Chlamydophila abortus).